A 248-amino-acid chain; its full sequence is Homeotic protein ultrabithorax (248 aa).

Residues 116–125 are compositionally biased toward gly residues; it reads GTGGGGGGSA. Positions 116-191 are disordered; sequence GTGGGGGGSA…GSAGVVGGAG (76 aa). Residues 126-139 show a composition bias toward low complexity; that stretch reads GSANGANNTANGQN. Composition is skewed to gly residues over residues 140-152 and 182-191; these read TSGG…GGGM and GSAGVVGGAG. Residues 241–246 carry the Antp-type hexapeptide motif; sequence FYPWMA.

The protein belongs to the Antp homeobox family.

Its subcellular location is the nucleus. Sequence-specific transcription factor which is part of a developmental regulatory system that provides cells with specific positional identities on the anterior-posterior axis. Binds the consensus region 5'-TTAAT[GT][GA]-3'. The chain is Homeotic protein ultrabithorax (Ubx) from Musca domestica (House fly).